Reading from the N-terminus, the 247-residue chain is UDP-2,3-diacylglucosamine hydrolase (247 aa).

Mn(2+)-binding residues include aspartate 8, histidine 10, aspartate 41, asparagine 79, and histidine 114. 79 to 80 serves as a coordination point for substrate; sequence NR. Residues aspartate 122, serine 160, aspartate 171, glutamine 174, and histidine 202 each coordinate substrate. The Mn(2+) site is built by histidine 202 and histidine 204.

The protein belongs to the LpxH family. The cofactor is Mn(2+).

The protein localises to the cell inner membrane. It carries out the reaction UDP-2-N,3-O-bis[(3R)-3-hydroxytetradecanoyl]-alpha-D-glucosamine + H2O = 2-N,3-O-bis[(3R)-3-hydroxytetradecanoyl]-alpha-D-glucosaminyl 1-phosphate + UMP + 2 H(+). It functions in the pathway glycolipid biosynthesis; lipid IV(A) biosynthesis; lipid IV(A) from (3R)-3-hydroxytetradecanoyl-[acyl-carrier-protein] and UDP-N-acetyl-alpha-D-glucosamine: step 4/6. Its function is as follows. Hydrolyzes the pyrophosphate bond of UDP-2,3-diacylglucosamine to yield 2,3-diacylglucosamine 1-phosphate (lipid X) and UMP by catalyzing the attack of water at the alpha-P atom. Involved in the biosynthesis of lipid A, a phosphorylated glycolipid that anchors the lipopolysaccharide to the outer membrane of the cell. The chain is UDP-2,3-diacylglucosamine hydrolase from Xanthomonas campestris pv. campestris (strain 8004).